The chain runs to 293 residues: Ribosomal protein L11 methyltransferase (293 aa).

S-adenosyl-L-methionine contacts are provided by threonine 145, glycine 166, aspartate 188, and asparagine 230.

This sequence belongs to the methyltransferase superfamily. PrmA family.

It is found in the cytoplasm. The catalysed reaction is L-lysyl-[protein] + 3 S-adenosyl-L-methionine = N(6),N(6),N(6)-trimethyl-L-lysyl-[protein] + 3 S-adenosyl-L-homocysteine + 3 H(+). In terms of biological role, methylates ribosomal protein L11. In Citrobacter koseri (strain ATCC BAA-895 / CDC 4225-83 / SGSC4696), this protein is Ribosomal protein L11 methyltransferase.